Consider the following 263-residue polypeptide: SPRY domain-containing SOCS box protein 2 (263 aa).

Residues 1–16 (MGQTALAGGSSSTPTP) show a composition bias toward polar residues. Positions 1–48 (MGQTALAGGSSSTPTPQALYPDLSCPEGLEELLSAPPPDLGAQRRHGW) are disordered. The region spanning 26–221 (PEGLEELLSA…VRIRYLGERR (196 aa)) is the B30.2/SPRY domain. Residues 222 to 263 (AEPHSLLHLSRLCVRHNLGDTRLGQVSALPLPPAMKRYLLYQ) enclose the SOCS box domain.

Belongs to the SPSB family. In terms of assembly, component of the probable ECS(SPSB2) E3 ubiquitin-protein ligase complex which contains CUL5, RNF7/RBX2, Elongin BC complex and SPSB2. Interacts with CUL5, RNF7, ELOB and ELOC. Interacts with MET. Interacts (via B30.2/SPRY domain) with PAWR; this interaction occurs in association with the Elongin BC complex. Interacts with NOS2. As to quaternary structure, (Microbial infection) Interacts (via C-terminus) with HCV envelope glycoprotein E1. Interacts (via C-terminus) with HCV non-structural protein 5A; this interaction targets NS5A for ubiquitination and degradation.

Its subcellular location is the cytoplasm. It is found in the cytosol. Its pathway is protein modification; protein ubiquitination. Functionally, substrate recognition component of a SCF-like ECS (Elongin BC-CUL2/5-SOCS-box protein) E3 ubiquitin-protein ligase complex which mediates the ubiquitination and subsequent proteasomal degradation of target proteins. Negatively regulates nitric oxide (NO) production and limits cellular toxicity in activated macrophages by mediating the ubiquitination and proteasomal degradation of NOS2. Acts as a bridge which links NOS2 with the ECS E3 ubiquitin ligase complex components ELOC and CUL5. The chain is SPRY domain-containing SOCS box protein 2 (SPSB2) from Homo sapiens (Human).